The chain runs to 181 residues: Regulator of G-protein signaling 10 (181 aa).

Residues 1–35 (MFTRAVSRLSRKRPPSDIHDGDGSSSSGHQSLKST) are disordered. A phosphoserine mark is found at Ser-24 and Ser-41. The 116-residue stretch at 41-156 (SLENLLEDPE…LKSDLFLKHR (116 aa)) folds into the RGS domain. Cys-74 carries S-palmitoyl cysteine lipidation. Positions 157-181 (RTEEEEEDPPDAQTAAKRASRIYNT) are disordered. Phosphoserine is present on Ser-176.

Interacts with GNAZ, GNAI1 and GNAI3. Associates specifically with the activated, GTP-bound forms of GNAZ and GNAI3.

The protein localises to the cytoplasm. The protein resides in the cytosol. It localises to the nucleus. Its function is as follows. Regulates G protein-coupled receptor signaling cascades, including signaling downstream of the muscarinic acetylcholine receptor CHRM2. Inhibits signal transduction by increasing the GTPase activity of G protein alpha subunits, thereby driving them into their inactive GDP-bound form. Modulates the activity of potassium channels that are activated in response to CHRM2 signaling. Activity on GNAZ is inhibited by palmitoylation of the G-protein. This is Regulator of G-protein signaling 10 (Rgs10) from Rattus norvegicus (Rat).